The primary structure comprises 55 residues: MAKGKRDKIRMISSAATGHFYTTDKNKKNTPGKMEMMKYDPVVRKHVMYKEGKIK.

The protein belongs to the bacterial ribosomal protein bL33 family.

In Xanthomonas axonopodis pv. citri (strain 306), this protein is Large ribosomal subunit protein bL33.